Consider the following 578-residue polypeptide: Arginine--tRNA ligase (578 aa).

Positions 122–132 (PNVAKEMHVGH) match the 'HIGH' region motif.

It belongs to the class-I aminoacyl-tRNA synthetase family. As to quaternary structure, monomer.

It localises to the cytoplasm. The enzyme catalyses tRNA(Arg) + L-arginine + ATP = L-arginyl-tRNA(Arg) + AMP + diphosphate. The protein is Arginine--tRNA ligase of Shigella sonnei (strain Ss046).